The chain runs to 483 residues: Centrosomal protein cep57l1 (483 aa).

Residues 94 to 228 (EHKKVLESEK…AQVQTSLEVN (135 aa)) adopt a coiled-coil conformation. Disordered regions lie at residues 237-261 (AQNS…SKEP), 303-325 (PQVS…GGSR), and 416-460 (KEQP…SKAS). Positions 243-252 (RKVKKKKQSK) are enriched in basic residues. Positions 375 to 418 (EDLERELDYVVKQMEIKSDQIMKLKRHQLNVNKLKKTAKLLKEQ) form a coiled coil. Residues 420 to 435 (RPTSVTKLAADKQNTG) are compositionally biased toward polar residues.

This sequence belongs to the translokin family. In terms of assembly, interacts with clip1, mis12, ndc80 and zwint. Interacts with gamma-tubulin.

The protein localises to the cytoplasm. It is found in the cytoskeleton. It localises to the microtubule organizing center. Its subcellular location is the centrosome. The protein resides in the chromosome. The protein localises to the centromere. It is found in the kinetochore. It localises to the spindle. In terms of biological role, required for spindle microtubule attachment to both kinetochores and centrosomes. Also functions to tether minus-ends of spindle microtubules to centrosomes. May act by forming ring-like structures around microtubules, or by serving as a cross-linker or scaffold at the attachment site. The protein is Centrosomal protein cep57l1 (cep57l1) of Xenopus tropicalis (Western clawed frog).